A 1594-amino-acid polypeptide reads, in one-letter code: Mediator of RNA polymerase II transcription subunit 12 (1594 aa).

2 disordered regions span residues Met-1 to Arg-116 and Pro-1499 to Val-1532. Composition is skewed to low complexity over residues Pro-81–Pro-93 and Pro-1499–Ser-1521.

The protein belongs to the Mediator complex subunit 12 family. As to quaternary structure, component of the srb8-11 complex, which itself associates with the Mediator complex.

The protein resides in the nucleus. Component of the srb8-11 complex. The srb8-11 complex is a regulatory module of the Mediator complex which is itself involved in regulation of basal and activated RNA polymerase II-dependent transcription. The srb8-11 complex may be involved in the transcriptional repression of a subset of genes regulated by Mediator. It may inhibit the association of the Mediator complex with RNA polymerase II to form the holoenzyme complex. The polypeptide is Mediator of RNA polymerase II transcription subunit 12 (srb8) (Aspergillus oryzae (strain ATCC 42149 / RIB 40) (Yellow koji mold)).